A 739-amino-acid chain; its full sequence is Probable endo-1,3(4)-beta-glucanase An02g00850 (739 aa).

The N-terminal stretch at 1–24 (MPTSTLLWSVGSLALSSMVLPAAA) is a signal peptide. Residues 31–283 (ETWKGEDFLT…WAGGVYSTSG (253 aa)) form the GH16 domain. Residues Asn59 and Asn74 are each glycosylated (N-linked (GlcNAc...) asparagine). Glu140 functions as the Nucleophile in the catalytic mechanism. The active-site Proton donor is the Glu145. The N-linked (GlcNAc...) asparagine glycan is linked to Asn396. Composition is skewed to low complexity over residues 431-442 (SEATEASNSEGS), 452-499 (TGAS…AGAT), and 507-522 (GASGEADSSEGASAAA). Residues 431 to 718 (SEATEASNSE…TPSTPVFTGG (288 aa)) form a disordered region. Residues Asn459 and Asn482 are each glycosylated (N-linked (GlcNAc...) asparagine). Polar residues predominate over residues 523–532 (TPSNVSSTGA). Residues Asn526 and Asn537 are each glycosylated (N-linked (GlcNAc...) asparagine). Residues 539–548 (SEDSSASSEA) are compositionally biased toward polar residues. Residues 561 to 587 (GASAEANGNDSASSNAATASNVSGASA) are compositionally biased toward low complexity. N-linked (GlcNAc...) asparagine glycans are attached at residues Asn569, Asn581, Asn592, and Asn620. The span at 597 to 641 (ASAGANAGSSAAPSSVSGASAEANGSEGSSSHSSGSQAGAHSYGS) shows a compositional bias: low complexity. A compositionally biased stretch (polar residues) spans 654–673 (PSSSSHAFATAPSSTGSSRV). Over residues 674 to 713 (PTSAAAANNAAAATQGSSASGSNSGSSGHGSSSATTPSTP) the composition is skewed to low complexity. Residue Gly717 is the site of GPI-anchor amidated glycine attachment. A propeptide spans 718 to 739 (GANKLTLGASSVLSVLAFALLA) (removed in mature form).

It belongs to the glycosyl hydrolase 16 family.

The protein resides in the cell membrane. The catalysed reaction is Endohydrolysis of (1-&gt;3)- or (1-&gt;4)-linkages in beta-D-glucans when the glucose residue whose reducing group is involved in the linkage to be hydrolyzed is itself substituted at C-3.. In terms of biological role, mixed-linked glucanase involved in the degradation of complex natural cellulosic substrates. The protein is Probable endo-1,3(4)-beta-glucanase An02g00850 of Aspergillus niger (strain ATCC MYA-4892 / CBS 513.88 / FGSC A1513).